Consider the following 78-residue polypeptide: uncharacterized protein (78 aa).

The tract at residues 20 to 78 is disordered; sequence LQDLFPPHFGNEEADEDDEDGDKYGDDDGEFYGDNDGDNDGDNDGVNDGVGDGPPSTLL. Residues 31–64 show a composition bias toward acidic residues; it reads EEADEDDEDGDKYGDDDGEFYGDNDGDNDGDNDG.

This is an uncharacterized protein from Dictyostelium discoideum (Social amoeba).